The sequence spans 297 residues: Retroviral cyclin (297 aa).

Positions 21–113 (PVYWKELLNW…KPSLLLTETM (93 aa)) constitute a Cyclin N-terminal domain. The interval 21–113 (PVYWKELLNW…KPSLLLTETM (93 aa)) is transcription activation domain. Residues 222 to 270 (QINLDFAEAEQREAAERRALLEREREQQLQEARERLDDVMAVLEAEVAI) are a coiled coil.

The protein belongs to the cyclin family. Interacts (via transcription activation domain) with host TAF9 in vitro. Interacts with host CDK3 and CDK8.

The protein resides in the host nucleus. Functionally, transforming protein which induces the development of dermal sarcomas. Induces positive and negative regulation of transcription from host and viral promoters by interacting with various cellular factors involved in protein transcription regulation. This Sander vitreus (Walleye) protein is Retroviral cyclin (orfA).